We begin with the raw amino-acid sequence, 221 residues long: Thiamine-phosphate synthase (221 aa).

4-amino-2-methyl-5-(diphosphooxymethyl)pyrimidine is bound by residues glutamine 46–lysine 50 and asparagine 83. Aspartate 84 and aspartate 103 together coordinate Mg(2+). Serine 122 contacts 4-amino-2-methyl-5-(diphosphooxymethyl)pyrimidine. Threonine 149 to serine 151 contributes to the 2-[(2R,5Z)-2-carboxy-4-methylthiazol-5(2H)-ylidene]ethyl phosphate binding site. Lysine 152 lines the 4-amino-2-methyl-5-(diphosphooxymethyl)pyrimidine pocket. Residues glycine 181 and isoleucine 201–serine 202 each bind 2-[(2R,5Z)-2-carboxy-4-methylthiazol-5(2H)-ylidene]ethyl phosphate.

Belongs to the thiamine-phosphate synthase family. Mg(2+) is required as a cofactor.

The enzyme catalyses 2-[(2R,5Z)-2-carboxy-4-methylthiazol-5(2H)-ylidene]ethyl phosphate + 4-amino-2-methyl-5-(diphosphooxymethyl)pyrimidine + 2 H(+) = thiamine phosphate + CO2 + diphosphate. The catalysed reaction is 2-(2-carboxy-4-methylthiazol-5-yl)ethyl phosphate + 4-amino-2-methyl-5-(diphosphooxymethyl)pyrimidine + 2 H(+) = thiamine phosphate + CO2 + diphosphate. It carries out the reaction 4-methyl-5-(2-phosphooxyethyl)-thiazole + 4-amino-2-methyl-5-(diphosphooxymethyl)pyrimidine + H(+) = thiamine phosphate + diphosphate. The protein operates within cofactor biosynthesis; thiamine diphosphate biosynthesis; thiamine phosphate from 4-amino-2-methyl-5-diphosphomethylpyrimidine and 4-methyl-5-(2-phosphoethyl)-thiazole: step 1/1. Functionally, condenses 4-methyl-5-(beta-hydroxyethyl)thiazole monophosphate (THZ-P) and 2-methyl-4-amino-5-hydroxymethyl pyrimidine pyrophosphate (HMP-PP) to form thiamine monophosphate (TMP). This Actinobacillus succinogenes (strain ATCC 55618 / DSM 22257 / CCUG 43843 / 130Z) protein is Thiamine-phosphate synthase.